Here is a 306-residue protein sequence, read N- to C-terminus: Putative transcriptional regulator (306 aa).

The region spanning 1–61 (MIKRNLNDLL…TRTTRSVSPT (61 aa)) is the HTH lysR-type domain. A DNA-binding region (H-T-H motif) is located at residues 21–40 (FTRAAAQLGVTQSALSQSIS).

Belongs to the LysR transcriptional regulatory family.

Its function is as follows. May have a role in the regulation of oprD expression. The sequence is that of Putative transcriptional regulator from Pseudomonas aeruginosa (strain ATCC 15692 / DSM 22644 / CIP 104116 / JCM 14847 / LMG 12228 / 1C / PRS 101 / PAO1).